The sequence spans 237 residues: Ribosomal RNA small subunit methyltransferase G (237 aa).

S-adenosyl-L-methionine-binding positions include glycine 78, phenylalanine 83, 129–130 (AE), and arginine 148.

Belongs to the methyltransferase superfamily. RNA methyltransferase RsmG family.

The protein resides in the cytoplasm. Specifically methylates the N7 position of a guanine in 16S rRNA. In Streptococcus equi subsp. zooepidemicus (strain MGCS10565), this protein is Ribosomal RNA small subunit methyltransferase G.